The following is a 256-amino-acid chain: Small ribosomal subunit protein eS1 (256 aa).

Alanine 2 carries the N-acetylalanine; partial modification.

Belongs to the eukaryotic ribosomal protein eS1 family. In terms of assembly, component of the small ribosomal subunit. Mature ribosomes consist of a small (40S) and a large (60S) subunit. The 40S subunit contains about 33 different proteins and 1 molecule of RNA (18S). The 60S subunit contains about 49 different proteins and 3 molecules of RNA (25S, 5.8S and 5S).

It localises to the cytoplasm. This Candida albicans (strain SC5314 / ATCC MYA-2876) (Yeast) protein is Small ribosomal subunit protein eS1.